Consider the following 1206-residue polypeptide: DNA polymerase (1206 aa).

Belongs to the DNA polymerase type-B family.

The enzyme catalyses DNA(n) + a 2'-deoxyribonucleoside 5'-triphosphate = DNA(n+1) + diphosphate. In Pyramimonas orientalis virus (PoV01), this protein is DNA polymerase (dpo).